The chain runs to 351 residues: Biotin synthase (351 aa).

Positions 42-269 (NEVQVSTLLS…KSHVRLSAGR (228 aa)) constitute a Radical SAM core domain. Residues Cys-57, Cys-61, and Cys-64 each coordinate [4Fe-4S] cluster. Residues Cys-101, Cys-132, Cys-192, and Arg-264 each contribute to the [2Fe-2S] cluster site.

This sequence belongs to the radical SAM superfamily. Biotin synthase family. In terms of assembly, homodimer. Requires [4Fe-4S] cluster as cofactor. It depends on [2Fe-2S] cluster as a cofactor.

The catalysed reaction is (4R,5S)-dethiobiotin + (sulfur carrier)-SH + 2 reduced [2Fe-2S]-[ferredoxin] + 2 S-adenosyl-L-methionine = (sulfur carrier)-H + biotin + 2 5'-deoxyadenosine + 2 L-methionine + 2 oxidized [2Fe-2S]-[ferredoxin]. The protein operates within cofactor biosynthesis; biotin biosynthesis; biotin from 7,8-diaminononanoate: step 2/2. In terms of biological role, catalyzes the conversion of dethiobiotin (DTB) to biotin by the insertion of a sulfur atom into dethiobiotin via a radical-based mechanism. In Psychromonas ingrahamii (strain DSM 17664 / CCUG 51855 / 37), this protein is Biotin synthase.